The following is a 78-amino-acid chain: Apolipoprotein C-I (78 aa).

A signal peptide spans 1 to 26; the sequence is MRLILWLPVLVVVLLMVLEGPAPAQG.

It belongs to the apolipoprotein C1 family.

The protein localises to the secreted. In terms of biological role, inhibitor of lipoprotein binding to the low density lipoprotein (LDL) receptor, LDL receptor-related protein, and very low density lipoprotein (VLDL) receptor. Associates with high density lipoproteins (HDL) and the triacylglycerol-rich lipoproteins in the plasma and makes up about 10% of the protein of the VLDL and 2% of that of HDL. Appears to interfere directly with fatty acid uptake and is also the major plasma inhibitor of cholesteryl ester transfer protein (CETP). Binds free fatty acids and reduces their intracellular esterification. Modulates the interaction of APOE with beta-migrating VLDL and inhibits binding of beta-VLDL to the LDL receptor-related protein. The chain is Apolipoprotein C-I (APOC1) from Puma concolor (Mountain lion).